Here is a 390-residue protein sequence, read N- to C-terminus: 1-deoxy-D-xylulose 5-phosphate reductoisomerase (390 aa).

The NADPH site is built by Thr-10, Gly-11, Ser-12, Ile-13, Gly-36, Arg-37, Asn-38, and Asn-121. Lys-122 contributes to the 1-deoxy-D-xylulose 5-phosphate binding site. Glu-123 is an NADPH binding site. Asp-147 is a Mn(2+) binding site. Ser-148, Glu-149, Ser-173, and His-196 together coordinate 1-deoxy-D-xylulose 5-phosphate. Glu-149 lines the Mn(2+) pocket. Gly-202 is an NADPH binding site. 1-deoxy-D-xylulose 5-phosphate-binding residues include Ser-209, Asn-214, Lys-215, and Glu-218. Glu-218 is a Mn(2+) binding site. The segment at 367-390 (AASEHGRREAEKRVGARAHAPAGR) is disordered. The segment covering 370–380 (EHGRREAEKRV) has biased composition (basic and acidic residues).

The protein belongs to the DXR family. The cofactor is Mg(2+). It depends on Mn(2+) as a cofactor.

It catalyses the reaction 2-C-methyl-D-erythritol 4-phosphate + NADP(+) = 1-deoxy-D-xylulose 5-phosphate + NADPH + H(+). The protein operates within isoprenoid biosynthesis; isopentenyl diphosphate biosynthesis via DXP pathway; isopentenyl diphosphate from 1-deoxy-D-xylulose 5-phosphate: step 1/6. Catalyzes the NADPH-dependent rearrangement and reduction of 1-deoxy-D-xylulose-5-phosphate (DXP) to 2-C-methyl-D-erythritol 4-phosphate (MEP). This Anaeromyxobacter sp. (strain K) protein is 1-deoxy-D-xylulose 5-phosphate reductoisomerase.